The primary structure comprises 153 residues: Transcriptional repressor NrdR (153 aa).

A zinc finger lies at 3–34 (CPSCSHNGTRVLDSRPVDEGRSIRRRRECESC). The ATP-cone domain occupies 49–139 (LIVVKKEGTR…VYRQFKDLNV (91 aa)).

Belongs to the NrdR family. Zn(2+) is required as a cofactor.

Its function is as follows. Negatively regulates transcription of bacterial ribonucleotide reductase nrd genes and operons by binding to NrdR-boxes. The sequence is that of Transcriptional repressor NrdR from Bacillus anthracis (strain A0248).